The chain runs to 153 residues: ATP synthase subunit b' (153 aa).

The chain crosses the membrane as a helical span at residues 20-40 (TLPLMAAQVVLLTFILNALFF).

This sequence belongs to the ATPase B chain family. F-type ATPases have 2 components, F(1) - the catalytic core - and F(0) - the membrane proton channel. F(1) has five subunits: alpha(3), beta(3), gamma(1), delta(1), epsilon(1). F(0) has four main subunits: a(1), b(1), b'(1) and c(10-14). The alpha and beta chains form an alternating ring which encloses part of the gamma chain. F(1) is attached to F(0) by a central stalk formed by the gamma and epsilon chains, while a peripheral stalk is formed by the delta, b and b' chains.

The protein localises to the cellular thylakoid membrane. Functionally, f(1)F(0) ATP synthase produces ATP from ADP in the presence of a proton or sodium gradient. F-type ATPases consist of two structural domains, F(1) containing the extramembraneous catalytic core and F(0) containing the membrane proton channel, linked together by a central stalk and a peripheral stalk. During catalysis, ATP synthesis in the catalytic domain of F(1) is coupled via a rotary mechanism of the central stalk subunits to proton translocation. In terms of biological role, component of the F(0) channel, it forms part of the peripheral stalk, linking F(1) to F(0). The b'-subunit is a diverged and duplicated form of b found in plants and photosynthetic bacteria. In Prochlorococcus marinus (strain SARG / CCMP1375 / SS120), this protein is ATP synthase subunit b'.